Consider the following 38-residue polypeptide: Large ribosomal subunit protein bL36 (38 aa).

This sequence belongs to the bacterial ribosomal protein bL36 family.

The sequence is that of Large ribosomal subunit protein bL36 from Wigglesworthia glossinidia brevipalpis.